The chain runs to 264 residues: Pimeloyl-[acyl-carrier protein] methyl ester esterase (264 aa).

Positions 23-244 constitute an AB hydrolase-1 domain; the sequence is LVMLHGWGVN…MLAKASHAPF (222 aa). Residues Trp29, 87–88, and 150–154 each bind substrate; these read SL and FLAIQ. Ser87 serves as the catalytic Nucleophile. Residues Asp214 and His241 contribute to the active site. His241 is a binding site for substrate.

It belongs to the AB hydrolase superfamily. Carboxylesterase BioH family. Monomer.

The protein resides in the cytoplasm. It catalyses the reaction 6-carboxyhexanoyl-[ACP] methyl ester + H2O = 6-carboxyhexanoyl-[ACP] + methanol + H(+). It functions in the pathway cofactor biosynthesis; biotin biosynthesis. In terms of biological role, the physiological role of BioH is to remove the methyl group introduced by BioC when the pimeloyl moiety is complete. It allows to synthesize pimeloyl-ACP via the fatty acid synthetic pathway through the hydrolysis of the ester bonds of pimeloyl-ACP esters. This is Pimeloyl-[acyl-carrier protein] methyl ester esterase from Shewanella sp. (strain MR-7).